The chain runs to 178 residues: Large ribosomal subunit protein bL25 (178 aa).

It belongs to the bacterial ribosomal protein bL25 family. CTC subfamily. Part of the 50S ribosomal subunit; part of the 5S rRNA/L5/L18/L25 subcomplex. Contacts the 5S rRNA. Binds to the 5S rRNA independently of L5 and L18.

Its function is as follows. This is one of the proteins that binds to the 5S RNA in the ribosome where it forms part of the central protuberance. The polypeptide is Large ribosomal subunit protein bL25 (Helicobacter pylori (strain ATCC 700392 / 26695) (Campylobacter pylori)).